The following is a 123-amino-acid chain: Methicillin resistance regulatory protein MecI (123 aa).

The segment at residues 7 to 71 is a DNA-binding region (H-T-H motif); that stretch reads EISSAEWEVM…KDNKIFQYYS (65 aa). The tract at residues 74 to 123 is important for dimerization; it reads EESDIKYKTSKNFINKVYKGGFNSLVLNFVEKEDLSQDEIEELRNILNKK.

It belongs to the BlaI transcriptional regulatory family. In terms of assembly, monomer and homodimer. Upon exposure to beta-lactams, proteolytic cleavage at a single site impairs dimerization and abolishes repressor activity.

The protein localises to the cytoplasm. Its function is as follows. Transcriptional repressor that constitutively blocks the transcription of the gene for the penicillin-binding protein MecA. Binds DNA as a dimer. This chain is Methicillin resistance regulatory protein MecI (mecI), found in Mammaliicoccus sciuri (Staphylococcus sciuri).